The primary structure comprises 335 residues: Cytoskeleton protein RodZ (335 aa).

Residues 1–111 lie on the Cytoplasmic side of the membrane; sequence MNTEATHDQN…LGKRRKKRDG (111 aa). Residues 19–71 enclose the HTH cro/C1-type domain; the sequence is LRNAREQLGLSQQAVAERLCLKVSTVRDIEEDKAPADLASTFLRGYIRSYARL. Residues 30–49 constitute a DNA-binding region (H-T-H motif); it reads QQAVAERLCLKVSTVRDIEE. A helical; Signal-anchor for type II membrane protein membrane pass occupies residues 112–132; the sequence is WLMTFTWLVLFVVIGLSGAWW. Residues 133–335 are Periplasmic-facing; it reads WQDHKAQQEE…TLNAEQSPAQ (203 aa). Residues 148-164 are compositionally biased toward polar residues; the sequence is DQSSAELNNNQSQSVPL. The interval 148–239 is disordered; it reads DQSSAELNNN…PDGAAPLPTD (92 aa). Composition is skewed to low complexity over residues 165–205 and 217–239; these read DTST…DPQQ and DTAATPAPAATTTPDGAAPLPTD.

Belongs to the RodZ family.

The protein resides in the cell inner membrane. In terms of biological role, cytoskeletal protein that is involved in cell-shape control through regulation of the length of the long axis. The protein is Cytoskeleton protein RodZ of Escherichia coli O6:K15:H31 (strain 536 / UPEC).